Consider the following 652-residue polypeptide: Translation factor guf1, mitochondrial (652 aa).

The N-terminal 44 residues, 1–44, are a transit peptide targeting the mitochondrion; that stretch reads MSIFRLSRTFSLETCLKSSSFKIRWRFFSVSYASRKLASEDNKP. The region spanning 56 to 237 is the tr-type G domain; sequence NRVRNWAVIA…EIIQKIPPPK (182 aa). GTP-binding positions include 65 to 72, 130 to 134, and 184 to 187; these read AHIDHGKS, DTPGH, and NKVD.

The protein belongs to the TRAFAC class translation factor GTPase superfamily. Classic translation factor GTPase family. LepA subfamily.

The protein localises to the mitochondrion inner membrane. It carries out the reaction GTP + H2O = GDP + phosphate + H(+). In terms of biological role, promotes mitochondrial protein synthesis. May act as a fidelity factor of the translation reaction, by catalyzing a one-codon backward translocation of tRNAs on improperly translocated ribosomes. Binds to mitochondrial ribosomes in a GTP-dependent manner. This chain is Translation factor guf1, mitochondrial (guf1), found in Schizosaccharomyces pombe (strain 972 / ATCC 24843) (Fission yeast).